A 347-amino-acid chain; its full sequence is MEQSKGSASQLAFVYVGTVVGAGFATGREIVEFFLKFGWFGFFGILVSGGMFTLLGAKLMIISKRINAKSYQEMNIFLFGATAGRIINVFMLFVLLGVTSVMLSGAGALFEEQLGMSAQIGMLITIGLSLIVMTRGVKGIFGVNVFVVPLLIIFSMIVVADSFIFSESRNAAQWVWPHRWDWLLSAVSYGALNLSLAQAVLVPLANEMSSEKVIKKGALIGGTMLTIVLSASFLSLSTLPDVFLYDIPMAQVVYLFARSVHLIYLLIIFGEVFTSVIGNLYGLEKQVQSFLPVKSKYIFAAIMITAYITSQIGYGRLISTIYPLFGYVSLAFIGALLCKKAPRRRSL.

Helical transmembrane passes span 6 to 26 (GSASQLAFVYVGTVVGAGFAT), 37 to 57 (FGWFGFFGILVSGGMFTLLGA), 90 to 110 (FMLFVLLGVTSVMLSGAGALF), 114 to 134 (LGMSAQIGMLITIGLSLIVMT), 140 to 160 (IFGVNVFVVPLLIIFSMIVVA), 182 to 202 (WLLSAVSYGALNLSLAQAVLV), 217 to 237 (GALIGGTMLTIVLSASFLSLS), 262 to 282 (LIYLLIIFGEVFTSVIGNLYG), 289 to 309 (SFLPVKSKYIFAAIMITAYIT), and 317 to 337 (LISTIYPLFGYVSLAFIGALL).

The protein localises to the cell membrane. This is an uncharacterized protein from Bacillus subtilis (strain 168).